A 249-amino-acid polypeptide reads, in one-letter code: uncharacterized protein (249 aa).

Belongs to the ycf73 family.

It localises to the plastid. Its subcellular location is the chloroplast. This is an uncharacterized protein from Oryza sativa (Rice).